A 277-amino-acid polypeptide reads, in one-letter code: Mannosyl-3-phosphoglycerate phosphatase (277 aa).

The active-site Nucleophile is the Asp13. Positions 13, 15, and 219 each coordinate Mg(2+).

This sequence belongs to the HAD-like hydrolase superfamily. MPGP family. Mg(2+) is required as a cofactor.

Its subcellular location is the cytoplasm. It carries out the reaction 2-O-(alpha-D-mannosyl)-3-phosphoglycerate + H2O = (2R)-2-O-(alpha-D-mannosyl)-glycerate + phosphate. It functions in the pathway carbohydrate biosynthesis; 2-(alpha-D-mannosyl)-D-glycerate biosynthesis; 2-(alpha-D-mannosyl)-D-glycerate from GDP-alpha-D-mannose (MPG route): step 2/2. Functionally, hydrolyzes mannosyl-3-phosphoglycerate (MPG) to form the osmolyte mannosylglycerate (MG). In Aeropyrum pernix (strain ATCC 700893 / DSM 11879 / JCM 9820 / NBRC 100138 / K1), this protein is Mannosyl-3-phosphoglycerate phosphatase.